Reading from the N-terminus, the 498-residue chain is ATP synthase subunit beta, chloroplastic (498 aa).

An ATP-binding site is contributed by 172–179 (GGAGVGKT).

The protein belongs to the ATPase alpha/beta chains family. F-type ATPases have 2 components, CF(1) - the catalytic core - and CF(0) - the membrane proton channel. CF(1) has five subunits: alpha(3), beta(3), gamma(1), delta(1), epsilon(1). CF(0) has four main subunits: a(1), b(1), b'(1) and c(9-12).

The protein resides in the plastid. It localises to the chloroplast thylakoid membrane. It carries out the reaction ATP + H2O + 4 H(+)(in) = ADP + phosphate + 5 H(+)(out). In terms of biological role, produces ATP from ADP in the presence of a proton gradient across the membrane. The catalytic sites are hosted primarily by the beta subunits. This is ATP synthase subunit beta, chloroplastic from Drimys granadensis.